The chain runs to 563 residues: MSTSPDNLFCPEQNFYGPDSEKIYIDGSLHPVKVGMRRIKLSKTYTLHGTDFSSFPLYDTSGPYSDPSVTIDLHKGLPSTRDFWQKNRTDIEVCPGKNPSPMNNRTPVRAKQGKSVTQMHYARKGIITPEMEYVAIRENQQLEEWIERFSSNGSSVKPVTPEFVRDEIAKGRAIIPANINHPELEPMAIGRNFRVKINANIGNSALASSISEEVEKSVWACRWGADTVMDLSTGKNIHQTREWILRNSPVPIGTVPIYQALEKVGGKAEELNWNIYRDTLIEQAEQGVDYFTIHSGILLDFLPAAQRRTTGIVSRGGSIIAKWCRAHKQENFLYSHFDDICDILRSYDIAISIGDALRPGSIADANDEAQFSELKTLGELTLKAWKYDVQVMIEGPGHVPLNLVEENMRKQLEYCHEAPFYTLGPLVTDIAAGYDHVNSAIGGTLLASLGCAMLCYVTPKEHLGLPDKNDVREGVIVHKLAAHAADIAKGSPSALLHDKLMSSARYSFAWNDQFNLSLDPVKTRQVHAESSQQNTGDGTDDHFCTMCGPDFCSMKKSQEVTGK.

The interval 95-115 is disordered; sequence PGKNPSPMNNRTPVRAKQGKS. Substrate-binding positions include N200, M229, Y258, H294, 314–316, 355–358, and E394; these read SRG and DALR. Residue H398 participates in Zn(2+) binding. Residue Y421 participates in substrate binding. A Zn(2+)-binding site is contributed by H462. Positions 544, 547, and 552 each coordinate [4Fe-4S] cluster.

The protein belongs to the ThiC family. The cofactor is [4Fe-4S] cluster.

It carries out the reaction 5-amino-1-(5-phospho-beta-D-ribosyl)imidazole + S-adenosyl-L-methionine = 4-amino-2-methyl-5-(phosphooxymethyl)pyrimidine + CO + 5'-deoxyadenosine + formate + L-methionine + 3 H(+). The protein operates within cofactor biosynthesis; thiamine diphosphate biosynthesis. Its function is as follows. Catalyzes the synthesis of the hydroxymethylpyrimidine phosphate (HMP-P) moiety of thiamine from aminoimidazole ribotide (AIR) in a radical S-adenosyl-L-methionine (SAM)-dependent reaction. This chain is Phosphomethylpyrimidine synthase, found in Chlorobium phaeobacteroides (strain BS1).